The primary structure comprises 515 residues: MRDPSSLYAGFPVGSQYESVEPPSLALLSSIYQEQVPAAPGHSYEQCAQPWPPLYREGGTWSPDRGSMHGLSPGTQEGSCTQAEGTKDSLGGDETLSRKSKKKNYHRYAKPPYSYLAMIALVIQNSPEKRLKLSQILKEVSTLFPFFKGDYMGWKDSIRHNLSSNDCFKKVLKDPGKPQAKGNFWTVDVSRIPLDAMKLQNTALTRGGSDYFVQDLAPYILHNYKYEHNVVVYAPHHMPSHASSLPLAEDPHQTNTGGKLNTSFMIDSLLNDLQDVDLPDVPRNIESQRISPAVAINNMWSSAPLLYPQSKPTRNGRGPGFSASHSTYSSSSSSISTISPVGFQETQERSEDLLGRQTQRLGFPTKRPREDDGCSTPSSDTDAGNYSPTEPPKKMPLLSLDLPTSYTKSVAPNVVAPPSVLPFFHFPRFTYYNYGPSPYMTPPYWGFPRPTNPGGDSPRGPQTSLDLDNMLKTVPPNKSVFDVLTSHPGDLVHPSFLGQCLGSSGSPYPSRQGLM.

The disordered stretch occupies residues tyrosine 55–lysine 103. Polar residues predominate over residues proline 73 to glutamate 84. The segment at residues lysine 110–arginine 206 is a DNA-binding region (fork-head). The tract at residues tyrosine 307–serine 399 is disordered. The span at serine 322–serine 339 shows a compositional bias: low complexity. Residues serine 375 to proline 388 are compositionally biased toward polar residues. The segment at proline 377 to serine 503 is SMAD-interaction domain (SID). The Fast/FoxH1 motif 1 (FM1) motif lies at leucine 402–tyrosine 406. Positions proline 412 to proline 418 match the Fast/FoxH1 motif 2 (FM2) motif. An SMAD-interaction motif (SIM) motif is present at residues leucine 467–proline 488.

As to quaternary structure, ARF1 contains 2 smad2s, 1 smad4 and 1 foxh1/fast-1 protein. Interaction with smad4 is most likely indirect through interaction with the MH2 domain of smad2. Binds to the MH2 domain of smad3, which can incorporate into the ARF1 complex. The ARF1 and ARF2 complexes are activated by distinct TGF-beta family members; formation of ARF1 is promoted by activin. Interacts (via Fork-head domain) with gtf2ird1/wbscr11 (via repeats 4-5).

Its subcellular location is the nucleus. Its function is as follows. Transcriptional activator. Recognizes and binds to the DNA sequence 5'-TGT[GT][GT]ATT-3'. Upon TGF-beta induction, forms a transcriptionally active complex with smad2 and smad4 called activin-responsive factor 1 (ARF1), which binds a site on the mix-B/mix.2 promoter called the activin response element (ARE). Binds to activated smads and the ARE with much lower affinity than fast3. Necessary for the first steps in mesoderm specification, directly inducing mesodermal genes. Acts with fast3 to control the convergent extension movements of gastrulation. Binds to the proximal element (PE) of the gsc gene and cooperates with gtf2ird1/wbscr11 and SMAD proteins to regulate gsc transcription. The chain is Forkhead box protein H1 from Xenopus tropicalis (Western clawed frog).